Reading from the N-terminus, the 137-residue chain is Small ribosomal subunit protein uS12 (137 aa).

The interval 1 to 57 (MPTINQLVRKPRKSKVEKSKSPALNVGYNSRKKVQTNVSSPQKRGVATRVGTMTPKK) is disordered. Asp-102 is modified (3-methylthioaspartic acid).

Belongs to the universal ribosomal protein uS12 family. Part of the 30S ribosomal subunit. Contacts proteins S8 and S17. May interact with IF1 in the 30S initiation complex.

Its function is as follows. With S4 and S5 plays an important role in translational accuracy. Interacts with and stabilizes bases of the 16S rRNA that are involved in tRNA selection in the A site and with the mRNA backbone. Located at the interface of the 30S and 50S subunits, it traverses the body of the 30S subunit contacting proteins on the other side and probably holding the rRNA structure together. The combined cluster of proteins S8, S12 and S17 appears to hold together the shoulder and platform of the 30S subunit. The sequence is that of Small ribosomal subunit protein uS12 from Streptococcus suis (strain 98HAH33).